The primary structure comprises 605 residues: DNA mismatch repair protein MutL (605 aa).

Belongs to the DNA mismatch repair MutL/HexB family.

Its function is as follows. This protein is involved in the repair of mismatches in DNA. It is required for dam-dependent methyl-directed DNA mismatch repair. May act as a 'molecular matchmaker', a protein that promotes the formation of a stable complex between two or more DNA-binding proteins in an ATP-dependent manner without itself being part of a final effector complex. The polypeptide is DNA mismatch repair protein MutL (Pelotomaculum thermopropionicum (strain DSM 13744 / JCM 10971 / SI)).